We begin with the raw amino-acid sequence, 747 residues long: Potassium transporter 20 (747 aa).

The Cytoplasmic portion of the chain corresponds to 1–47 (MSVQEDDDAAGPEVDRLRRHDSFYGDAEKVSNDKSHGTGENWARTLQ). The helical transmembrane segment at 48–68 (LAFQSIGVVYGDVGTSPLYVY) threads the bilayer. Residues 69–84 (SSTFPDGVKHPDDLVG) are Extracellular-facing. The chain crosses the membrane as a helical span at residues 85 to 105 (VLSLMLYTLILIPMVKYVFIV). Residues 106-171 (LYANDNGDGG…QKLESSNAAK (66 aa)) are Cytoplasmic-facing. Residues 172-192 (IALFTITILGTSMVMGDGTLT) traverse the membrane as a helical segment. The Extracellular segment spans residues 193-209 (PAISVLSAVSGIREKAP). The helical transmembrane segment at 210–230 (SLTQLQVVWISVPILIVLFSV) threads the bilayer. Over 231-237 (QRFGTDK) the chain is Cytoplasmic. The helical transmembrane segment at 238 to 258 (VGYSFAPVISVWFVLIAGIGA) threads the bilayer. Topologically, residues 259–288 (YNLAVHEITILRAFNPMYIIDYFRRNGKEA) are extracellular. A helical membrane pass occupies residues 289 to 309 (WVSLGGAVLCITGTEAMFADL). The Cytoplasmic segment spans residues 310–318 (GHFNIRAIQ). Residues 319–339 (LSFTCVLFPSVALCYMGQAAY) form a helical membrane-spanning segment. The Extracellular segment spans residues 340–353 (LRKFPEDVGDTFYK). Residues 354–374 (SLPAPLFWPVFVVAIMAAIIA) traverse the membrane as a helical segment. Topologically, residues 375–410 (SQAMLSGAFAILSKALPLGCFPRVEVVHTSNKYEGQ) are cytoplasmic. The helical transmembrane segment at 411–431 (VYIPEVNFLIGVASVAITVAF) threads the bilayer. Residues 432-442 (QTTANIGNAYG) are Extracellular-facing. A helical membrane pass occupies residues 443–463 (ICVVMVFSITTHLMTVVMLLI). The Cytoplasmic portion of the chain corresponds to 464–469 (WKVRLP). Residues 470 to 490 (FIAAFYVVFTFTEFLYLSSIL) traverse the membrane as a helical segment. Residues 491 to 496 (SKFAEG) lie on the Extracellular side of the membrane. Residues 497-517 (GYLPFCFSLVLMALMATWHYV) traverse the membrane as a helical segment. Topologically, residues 518–747 (HVKRYWYELD…LLKVGITYEI (230 aa)) are cytoplasmic.

The protein belongs to the HAK/KUP transporter (TC 2.A.72.3) family.

Its subcellular location is the membrane. Its function is as follows. High-affinity potassium transporter. The chain is Potassium transporter 20 (HAK20) from Oryza sativa subsp. japonica (Rice).